The chain runs to 499 residues: 3-octaprenyl-4-hydroxybenzoate carboxy-lyase (499 aa).

A Mn(2+)-binding site is contributed by Asn173. Prenylated FMN-binding positions include Ile176 to Arg178, Arg190 to Leu192, and Arg195 to Gly196. Residue Glu239 participates in Mn(2+) binding. Asp288 functions as the Proton donor in the catalytic mechanism.

The protein belongs to the UbiD family. In terms of assembly, homohexamer. The cofactor is prenylated FMN. Mn(2+) serves as cofactor.

Its subcellular location is the cell membrane. The enzyme catalyses a 4-hydroxy-3-(all-trans-polyprenyl)benzoate + H(+) = a 2-(all-trans-polyprenyl)phenol + CO2. Its pathway is cofactor biosynthesis; ubiquinone biosynthesis. Catalyzes the decarboxylation of 3-octaprenyl-4-hydroxy benzoate to 2-octaprenylphenol, an intermediate step in ubiquinone biosynthesis. The chain is 3-octaprenyl-4-hydroxybenzoate carboxy-lyase from Blochmanniella floridana.